Here is a 306-residue protein sequence, read N- to C-terminus: Recombination-associated protein RdgC (306 aa).

The protein belongs to the RdgC family.

Its subcellular location is the cytoplasm. It localises to the nucleoid. May be involved in recombination. This chain is Recombination-associated protein RdgC, found in Pseudomonas syringae pv. syringae (strain B728a).